The sequence spans 555 residues: MFAHPFDHSFNDLFNQYVNMDTSSTDANKDVSFPSEFDQLFPLDSFSTDCGDQSPVISTVQHNSQPAQDWGKDLWSLSQNTGCSTNQDSFSFQDSTQPSTALDLSIGLEADATGHSQASVPRSTPSTPPATPGPKVKGGLFTPKTIRHHRESNDRRGLLRKQSFSPGLMRSSQLQKGSCRMAYPEAWAQRLQNFTIRSSDECLPLSPPPSDILVQQENVKHTPVQMRNAAEGFQGSTELPQQIDSGYITQSPAIPMPSPSANALAGQQQRYLSQTGTSALTPSPPSARDVFSSPHSSDPQSMPSWHSESLNTPAFQYTPELSDHQTWWSPMPSEVAQRHASYQQMIASPAPQRPVQAAANHGDFLQGGLMIQLDPTQFDISSSFPSSTIPTTANNHDNLAYNVEAHAPQKYVDASSFNTQAVPHPSRSPSISPKADTSPRHGSANRDGMAMKNAPRRPHGRKLSGQSTSTPKPVKTPNSLSTSPRGGKSVTVSFVNFTANDRQKILTGVAPSGSSKTKARREQEARDRRRKLSEAALQAVRKAGGDVEALEAVLC.

4 disordered regions span residues 113–171 (TGHS…LMRS), 250–310 (QSPA…SESL), 419–488 (TQAV…RGGK), and 508–531 (GVAP…RRRK). Composition is skewed to polar residues over residues 162–171 (QSFSPGLMRS), 259–281 (PSAN…SALT), 293–310 (SPHS…SESL), 419–431 (TQAV…SPSI), and 464–488 (SGQS…RGGK).

The protein belongs to the wetA family.

Functionally, brlA, abaA and wetA are pivotal regulators of conidiophore development and conidium maturation. They act individually and together to regulate their own expression and that of numerous other sporulation-specific genes. Responsible for activating a set of genes whose products make up the final two conidial wall layers or direct their assembly and, through this activity, is responsible for acquisition of spore dormancy. This Emericella nidulans (strain FGSC A4 / ATCC 38163 / CBS 112.46 / NRRL 194 / M139) (Aspergillus nidulans) protein is Developmental regulatory protein wetA.